The following is a 305-amino-acid chain: MIRALARGATIPRSFHYIQYYQKRNLLTHGLKKKHIPPYKTILALGAGAFISGLFMLQKDSITNDAGPIENSESSVEVDKSVSPFTVVLSPPETLLTTKYTLLGFGPRSVTFLGFKVYALGIYVANEDLPLIPKILNPTYLCKAFLDTDSAKSHSENVGAALKDATKSRVLVGSLIDGGVRFMAKITPIRNTDFNHLKDGLVKSILNHPECQKNQEAVSRGLQELKNAFTRKGSVPKNDDLIIELQANGSLQLSYRSRKQNECMMLGRVDEPLIGKFLFSQYLGGDKPLSPPTRETFAQKVKTLV.

The transit peptide at 1-22 (MIRALARGATIPRSFHYIQYYQ) directs the protein to the mitochondrion.

Belongs to the AIM18/AIM46 family.

The protein resides in the mitochondrion. This is Altered inheritance of mitochondria protein 18, mitochondrial (AIM18) from Lachancea thermotolerans (strain ATCC 56472 / CBS 6340 / NRRL Y-8284) (Yeast).